A 225-amino-acid polypeptide reads, in one-letter code: UPF0173 metal-dependent hydrolase PAE2160 (225 aa).

The protein belongs to the UPF0173 family.

The sequence is that of UPF0173 metal-dependent hydrolase PAE2160 from Pyrobaculum aerophilum (strain ATCC 51768 / DSM 7523 / JCM 9630 / CIP 104966 / NBRC 100827 / IM2).